The sequence spans 213 residues: Nucleolar protein 12 (213 aa).

Positions 32–95 (GFHKRKVERK…RLVTAKTESV (64 aa)) form a coiled coil. The segment at 117-213 (ARLLGLPTPE…LTGKARHSGE (97 aa)) is disordered. Basic residues-rich tracts occupy residues 169 to 181 (AHSR…KRLR) and 197 to 213 (SKTR…HSGE).

This sequence belongs to the RRP17 family. As to quaternary structure, interacts with KIAA1191.

It localises to the nucleus. The protein resides in the nucleolus. It is found in the cytoplasm. In terms of biological role, multifunctional RNA binding protein that plays a role in RNA metabolism and DNA maintenance. Participates in the resolution of DNA stress and the maintenance of genome integrity by localizing to sites of DNA insults. Also plays a role in proper nucleolar organization by limiting nucleolar size and regulating nucleolar number. Mechanistically, regulates the nucleolar levels of fibrillarin and nucleolin, two key players in pre-rRNA processing and ribosome assembly. This is Nucleolar protein 12 (NOL12) from Bos taurus (Bovine).